The sequence spans 500 residues: NAD(P)H-quinone oxidoreductase chain 4, chloroplastic (500 aa).

14 helical membrane-spanning segments follow: residues 4 to 24 (FPWLTILVVLPIFAGSLIFFL), 37 to 57 (ISICLLEFLLMTYAFCYHFQL), 87 to 107 (LGSILLTGFITTLATLAAWPI), 113 to 130 (LFYFLMLAMYSGQIGLFS), 134 to 154 (LLLFFIMWELELIPVYLLLSM), 167 to 187 (FILYTAGGSIFFLIGVLGMGL), 211 to 231 (ILLYFGFLIAYAVKLPIIPLH), 242 to 262 (HYSTCMLLAGILLKMGAYGLI), 272 to 292 (AHYLFSPWLVIIGAIQIIYAA), 313 to 333 (MGFIIIGIGSITNIGLNGAIL), 334 to 354 (QILSHGFIGATLFFLAGTASD), 386 to 406 (LALPGMSGFVAELVVFFGLIT), 417 to 437 (LITFVMAIGMILTPIYLLSML), and 462 to 482 (LFILICIFLPVIGIGIYPDFV).

The protein belongs to the complex I subunit 4 family.

The protein localises to the plastid. It is found in the chloroplast thylakoid membrane. The enzyme catalyses a plastoquinone + NADH + (n+1) H(+)(in) = a plastoquinol + NAD(+) + n H(+)(out). The catalysed reaction is a plastoquinone + NADPH + (n+1) H(+)(in) = a plastoquinol + NADP(+) + n H(+)(out). The protein is NAD(P)H-quinone oxidoreductase chain 4, chloroplastic (ndhD) of Triticum aestivum (Wheat).